The sequence spans 417 residues: Calreticulin (417 aa).

The signal sequence occupies residues 1 to 17 (MLLSVPLLLGLLGLAAA). The interval 18 to 197 (EPAVYFKEQF…NSQVESGSLE (180 aa)) is N-domain. Residue Gln-26 coordinates Ca(2+). Residue Lys-48 is modified to N6-acetyllysine. Lys-62 and Lys-64 together coordinate Ca(2+). N6-(2-hydroxyisobutyryl)lysine is present on Lys-64. Cys-105 and Cys-137 are joined by a disulfide. 4 residues coordinate an alpha-D-glucoside: Tyr-109, Lys-111, Tyr-128, and Asp-135. Lys-159 carries the post-translational modification N6-acetyllysine. A 1-1 repeat occupies 191–202 (VESGSLEDDWDF). The tract at residues 191-255 (VESGSLEDDW…DAKKPEDWDE (65 aa)) is 4 X approximate repeats. The disordered stretch occupies residues 193-277 (SGSLEDDWDF…NPEYKGEWKP (85 aa)). The interval 198–308 (DDWDFLPPKK…YSPDANIYAY (111 aa)) is P-domain. Residues 207 to 251 (KIKDPDAAKPEDWDERAKIDDPTDSKPEDWDKPEHIPDPDAKKPE) show a composition bias toward basic and acidic residues. N6-acetyllysine is present on Lys-209. 6 consecutive repeat copies span residues 210–221 (DPDAAKPEDWDE), 227–238 (DPTDSKPEDWDK), 244–255 (DPDAKKPEDWDE), 259–269 (GEWEPPVIQNP), 273–283 (GEWKPRQIDNP), and 287–297 (GTWIHPEIDNP). Residues 237 to 270 (DKPEHIPDPDAKKPEDWDEEMDGEWEPPVIQNPE) form an interaction with PPIB region. Residues 252 to 261 (DWDEEMDGEW) show a composition bias toward acidic residues. A 3 X approximate repeats region spans residues 259 to 297 (GEWEPPVIQNPEYKGEWKPRQIDNPDYKGTWIHPEIDNP). The C-domain stretch occupies residues 309-417 (DSFAVLGLDL…TTPGQTKDEL (109 aa)). Asp-317 is a binding site for an alpha-D-glucoside. Position 328 (Asp-328) interacts with Ca(2+). A disordered region spans residues 350-417 (TKASEKQMKD…TTPGQTKDEL (68 aa)). Basic and acidic residues predominate over residues 352-379 (ASEKQMKDKQDEEQRLKEEEEDKKRKEE). Residues 380 to 408 (EEAEDKEDEDDRDEDEEDEDEKEEDEEDT) are compositionally biased toward acidic residues. Positions 414–417 (KDEL) match the Prevents secretion from ER motif.

This sequence belongs to the calreticulin family. In terms of assembly, monomer. Component of an EIF2 complex at least composed of CELF1/CUGBP1, CALR, CALR3, EIF2S1, EIF2S2, HSP90B1 and HSPA5. Interacts with PDIA3/ERp57 and SPACA9. Interacts with TRIM21. Interacts with NR3C1. Interacts with PPIB. Interacts (via P-domain) with PDIA5. Interacts with GABARAP. Interacts with CLCC1.

Its subcellular location is the endoplasmic reticulum lumen. The protein resides in the cytoplasm. It is found in the cytosol. It localises to the cytolytic granule. The protein localises to the secreted. Its subcellular location is the extracellular space. The protein resides in the extracellular matrix. It is found in the cell surface. It localises to the sarcoplasmic reticulum lumen. The protein localises to the cytoplasmic vesicle. Its subcellular location is the secretory vesicle. The protein resides in the cortical granule. In terms of biological role, calcium-binding chaperone that promotes folding, oligomeric assembly and quality control in the endoplasmic reticulum (ER) via the calreticulin/calnexin cycle. This lectin interacts transiently with almost all of the monoglucosylated glycoproteins that are synthesized in the ER. Interacts with the DNA-binding domain of NR3C1 and mediates its nuclear export. Involved in maternal gene expression regulation. May participate in oocyte maturation via the regulation of calcium homeostasis. Present in the cortical granules of non-activated oocytes, is exocytosed during the cortical reaction in response to oocyte activation and might participate in the block to polyspermy. The polypeptide is Calreticulin (CALR) (Cricetulus griseus (Chinese hamster)).